We begin with the raw amino-acid sequence, 238 residues long: MVHLRRTLAPAWWPIPRKKGGVWVVRPSPGPHSLAYSLPLALIIRDVLKYAKTMHEARYIISRGYVKVDGVVRRDYKFPVGLMDVIEIVPTGEVYRVVPDADKYYNLLPISTEEAALKLLRVEGKTMVKGGRIQLHFHDGRNLITTLEAGKQIKTFDSVLYDLRNKAIKAHIPLKLGVNAVVIHGSNVGFSGTLYEIVWTLKRKQSVVALKKGDEVRRTILNYVMAVGSEGPVIKISP.

An S4 RNA-binding domain is found at 38-101 (LPLALIIRDV…GEVYRVVPDA (64 aa)).

It belongs to the eukaryotic ribosomal protein eS4 family.

This Pyrobaculum aerophilum (strain ATCC 51768 / DSM 7523 / JCM 9630 / CIP 104966 / NBRC 100827 / IM2) protein is Small ribosomal subunit protein eS4.